A 194-amino-acid chain; its full sequence is DPY30 domain-containing protein 2 (194 aa).

The interval 126-172 (EAFEKEPLKQESLPGTSDMIPGMPQQSPSSEPSVSSQVDLNTGTPQE) is disordered. Residues 149-163 (PQQSPSSEPSVSSQV) show a composition bias toward low complexity.

It belongs to the dpy-30 family.

The sequence is that of DPY30 domain-containing protein 2 (DYDC2) from Bos taurus (Bovine).